Here is a 549-residue protein sequence, read N- to C-terminus: Zinc finger protein 18 (549 aa).

The region spanning 41–123 (RQLFRQFRYQ…TLVESLKGDP (83 aa)) is the SCAN box domain. In terms of domain architecture, KRAB spans 211-283 (DLGASLLPAA…YLHVNEKIPR (73 aa)). 5 consecutive C2H2-type zinc fingers follow at residues 408 to 430 (PTCR…QRTH), 436 to 458 (FQCT…QRTH), 464 to 486 (CKCD…EKIH), 492 to 514 (YKCP…QRVH), and 520 to 542 (YKCS…QRSH).

This sequence belongs to the krueppel C2H2-type zinc-finger protein family.

The protein resides in the nucleus. Functionally, may be involved in transcriptional regulation. The polypeptide is Zinc finger protein 18 (ZNF18) (Homo sapiens (Human)).